The sequence spans 1328 residues: Protein turtle homolog B (1328 aa).

The N-terminal stretch at 1-17 (MIWYVATLIASVISTRG) is a signal peptide. At 18 to 722 (LVAQGAHGLR…DLTDDGLARP (705 aa)) the chain is on the extracellular side. 5 Ig-like domains span residues 30-115 (PEFV…ECKV), 139-226 (PTFT…LLVQ), 228-320 (PPFI…AYLT), 324-415 (PARV…ARLV), and 420-504 (PYFT…THLT). 2 cysteine pairs are disulfide-bonded: Cys45-Cys113 and Cys161-Cys208. N-linked (GlcNAc...) asparagine glycans are attached at residues Asn241 and Asn258. Intrachain disulfides connect Cys250-Cys303, Cys346-Cys397, and Cys442-Cys488. Fibronectin type-III domains follow at residues 512–604 (APGS…TLAF) and 614–708 (LVTP…STDI). Asn624 carries N-linked (GlcNAc...) asparagine glycosylation. Residues 723 to 743 (VLAGIVATICFLAAAILFSTL) form a helical membrane-spanning segment. At 744–1328 (AACFVNKQRK…EPPTTLPTSG (585 aa)) the chain is on the cytoplasmic side. 3 disordered regions span residues 758–817 (RKKD…EKEL), 914–1040 (PMSS…PEPW), and 1106–1328 (KSPG…PTSG). Ser775, Ser783, and Ser794 each carry phosphoserine. A compositionally biased stretch (low complexity) spans 990–1001 (SPLSSVMSSPPL). 3 stretches are compositionally biased toward polar residues: residues 1018 to 1033 (ENAS…TPTG), 1129 to 1141 (LVSQ…TSQG), and 1199 to 1214 (SRLS…SRTG). Arg1136 carries the omega-N-methylarginine modification. Ser1207 and Ser1215 each carry phosphoserine. Residues 1246-1273 (SFSRKSTPSSTGSPSQSSRSGSPSYRPT) show a composition bias toward low complexity. Composition is skewed to pro residues over residues 1284–1295 (PSPPPGPAPPAP) and 1318–1328 (PEPPTTLPTSG).

This sequence belongs to the immunoglobulin superfamily. Turtle family. In terms of assembly, found in a complex with MAGI2 and NLGN2, where it interacts with MAGI2 (via PDZ 5 and PDZ 6 domains). Post-translationally, N-glycosylated and sialylated. Not significantly O-glycosylated. In terms of tissue distribution, detected in brain.

The protein resides in the cell membrane. Its subcellular location is the postsynaptic cell membrane. The protein localises to the postsynaptic density. In terms of biological role, transmembrane protein which is abundantly expressed in interneurons, where it may regulate inhibitory synapse development. May mediate homophilic cell adhesion. The sequence is that of Protein turtle homolog B from Mus musculus (Mouse).